The primary structure comprises 20 residues: Elastase (20 aa).

The 20-residue stretch at 1 to 20 (VVGGEVARAHSWPWQISLQY) folds into the Peptidase S1 domain.

Belongs to the peptidase S1 family. Elastase subfamily.

In terms of biological role, digests most rapidly at the C-terminal side of alanine residues, but also cleaves at valine and leucine residues. This is Elastase from Gadus morhua (Atlantic cod).